The sequence spans 640 residues: Chaperone protein HtpG (640 aa).

Residues 1–343 (MQTAENIEHL…SSDLPLNVSR (343 aa)) form an a; substrate-binding region. Residues 344 to 564 (EILQESKDID…THDVSGNLGR (221 aa)) form a b region. Residues 565 to 640 (LLKSAGQKVP…LLLQNILSGK (76 aa)) are c.

This sequence belongs to the heat shock protein 90 family. In terms of assembly, homodimer.

It is found in the cytoplasm. In terms of biological role, molecular chaperone. Has ATPase activity. The protein is Chaperone protein HtpG of Nitrosomonas europaea (strain ATCC 19718 / CIP 103999 / KCTC 2705 / NBRC 14298).